The chain runs to 355 residues: UDP-3-O-acylglucosamine N-acyltransferase (355 aa).

His-252 acts as the Proton acceptor in catalysis.

Belongs to the transferase hexapeptide repeat family. LpxD subfamily. In terms of assembly, homotrimer.

The catalysed reaction is a UDP-3-O-[(3R)-3-hydroxyacyl]-alpha-D-glucosamine + a (3R)-hydroxyacyl-[ACP] = a UDP-2-N,3-O-bis[(3R)-3-hydroxyacyl]-alpha-D-glucosamine + holo-[ACP] + H(+). The protein operates within bacterial outer membrane biogenesis; LPS lipid A biosynthesis. Functionally, catalyzes the N-acylation of UDP-3-O-acylglucosamine using 3-hydroxyacyl-ACP as the acyl donor. Is involved in the biosynthesis of lipid A, a phosphorylated glycolipid that anchors the lipopolysaccharide to the outer membrane of the cell. This chain is UDP-3-O-acylglucosamine N-acyltransferase, found in Polynucleobacter asymbioticus (strain DSM 18221 / CIP 109841 / QLW-P1DMWA-1) (Polynucleobacter necessarius subsp. asymbioticus).